The following is an 801-amino-acid chain: Na(+)/H(+) antiporter subunit A (801 aa).

A run of 21 helical transmembrane segments spans residues 4 to 21, 28 to 50, 80 to 102, 109 to 128, 132 to 154, 166 to 188, 203 to 222, 229 to 251, 266 to 288, 301 to 323, 338 to 360, 372 to 394, 428 to 450, 471 to 493, 526 to 548, 594 to 616, 626 to 647, 654 to 671, 676 to 698, 710 to 732, and 772 to 789; these read LHLA…IPFL, VHTG…PMIR, GLLF…IFYL, LGPF…GVVL, VMVL…GYWY, SLLI…YLIT, IAGH…GAFT, FYIW…HSAT, IFAF…MVWG, ILAF…SAAA, AAIF…VGII, LGGL…FSMA, VLFP…KLLF, VGML…FPNI, GVTT…YLSL, YLLY…KGGF, IGVY…TVFA, IIAL…FVIF, LALT…FYHL, FRMT…GIAS, and MFEI…YSMI.

It belongs to the CPA3 antiporters (TC 2.A.63) subunit A family. Forms a heterooligomeric complex that consists of seven subunits: MrpA, MrpB, MrpC, MrpD, MrpE, MrpF and MrpG.

Its subcellular location is the cell membrane. In terms of biological role, mrp complex is a Na(+)/H(+) antiporter that is considered to be the major Na(+) excretion system in B.subtilis. Has a major role in Na(+) resistance and a minor role in Na(+)- and K(+)-dependent pH homeostasis as compared to TetB. MrpA may be the actual Na(+)/H(+) antiporter, although the six other Mrp proteins are all required for Na(+)/H(+) antiport activity and Na(+) resistance. MrpA is required for initiation of sporulation when external Na(+) concentration increases. Also transports Li(+) but not K(+), Ca(2+) or Mg(2+). This is Na(+)/H(+) antiporter subunit A (mrpA) from Bacillus subtilis (strain 168).